The primary structure comprises 550 residues: Methionine--tRNA ligase (550 aa).

A 'HIGH' region motif is present at residues 13–23 (PYANGPLHFGH). Zn(2+) is bound by residues C145, C148, C158, and C161. The short motif at 331-335 (QFSKS) is the 'KMSKS' region element. K334 contributes to the ATP binding site.

This sequence belongs to the class-I aminoacyl-tRNA synthetase family. MetG type 1 subfamily. In terms of assembly, monomer. Zn(2+) is required as a cofactor.

The protein resides in the cytoplasm. The catalysed reaction is tRNA(Met) + L-methionine + ATP = L-methionyl-tRNA(Met) + AMP + diphosphate. Its function is as follows. Is required not only for elongation of protein synthesis but also for the initiation of all mRNA translation through initiator tRNA(fMet) aminoacylation. The protein is Methionine--tRNA ligase (metG) of Chlamydia trachomatis serovar D (strain ATCC VR-885 / DSM 19411 / UW-3/Cx).